Reading from the N-terminus, the 448-residue chain is N-succinylarginine dihydrolase (448 aa).

Substrate contacts are provided by residues 19–28 (GGLSYGNVAS), Asn110, and 137–138 (HR). Glu174 is a catalytic residue. Residue Arg214 coordinates substrate. The active site involves His250. Substrate contacts are provided by Asp252 and Asn365. Cys371 (nucleophile) is an active-site residue.

It belongs to the succinylarginine dihydrolase family. Homodimer.

It carries out the reaction N(2)-succinyl-L-arginine + 2 H2O + 2 H(+) = N(2)-succinyl-L-ornithine + 2 NH4(+) + CO2. It participates in amino-acid degradation; L-arginine degradation via AST pathway; L-glutamate and succinate from L-arginine: step 2/5. Catalyzes the hydrolysis of N(2)-succinylarginine into N(2)-succinylornithine, ammonia and CO(2). The protein is N-succinylarginine dihydrolase of Pseudomonas fluorescens (strain SBW25).